The chain runs to 190 residues: Threonylcarbamoyl-AMP synthase (190 aa).

Positions 7 to 190 constitute a YrdC-like domain; it reads LSSLIKCIRK…IVNGKLIRYV (184 aa).

The protein belongs to the SUA5 family. TsaC subfamily.

It localises to the cytoplasm. It catalyses the reaction L-threonine + hydrogencarbonate + ATP = L-threonylcarbamoyladenylate + diphosphate + H2O. Functionally, required for the formation of a threonylcarbamoyl group on adenosine at position 37 (t(6)A37) in tRNAs that read codons beginning with adenine. Catalyzes the conversion of L-threonine, HCO(3)(-)/CO(2) and ATP to give threonylcarbamoyl-AMP (TC-AMP) as the acyladenylate intermediate, with the release of diphosphate. This Buchnera aphidicola subsp. Schizaphis graminum (strain Sg) protein is Threonylcarbamoyl-AMP synthase.